Here is an 853-residue protein sequence, read N- to C-terminus: Thrombospondin type-1 domain-containing protein 1 (853 aa).

Residues 1-24 form the signal peptide; it reads MKPMLKDFSNLLLVVLCDYVLGEA. Topologically, residues 25–414 are extracellular; the sequence is EYLLLREPGH…QPQGPVKSNN (390 aa). Residues Asn-39, Asn-53, Asn-58, Asn-69, Asn-80, Asn-135, and Asn-304 are each glycosylated (N-linked (GlcNAc...) asparagine). Residues 341–394 enclose the TSP type-1 domain; that stretch reads IETWGLWQPWSQCSATCGDGVRERRRVCLTSFPSRPGCPGMSLEASLCSLEECA. Cystine bridges form between Cys-353–Cys-388, Cys-357–Cys-393, and Cys-368–Cys-378. A helical membrane pass occupies residues 415 to 435; sequence IVTVTGISLCLFIIIATVLIT. The Cytoplasmic portion of the chain corresponds to 436–853; the sequence is LWRRFGRPAK…STLSVEKLVI (418 aa). Disordered stretches follow at residues 445-518, 624-650, 668-702, and 714-800; these read KCST…ESFQ, TLIR…RNAH, ERSM…QSRG, and QEAS…RKDK. Residue Ser-464 is modified to Phosphoserine. Positions 671–686 are enriched in polar residues; it reads MSTLTPRQAPAYSTRT. Over residues 687 to 697 the composition is skewed to basic and acidic residues; sequence RTCEQAEDRFR. Polar residues predominate over residues 767–795; that stretch reads SHKSVSRKQSSPTSPKDSYQRVSPLSPSQ.

As to quaternary structure, part of a complex composed of THSD1, PTK2/FAK1, TLN1 and VCL. Interacts with TLN1.

The protein resides in the endosome membrane. The protein localises to the cell junction. It is found in the focal adhesion. In terms of biological role, is a positive regulator of nascent focal adhesion assembly, involved in the modulation of endothelial cell attachment to the extracellular matrix. This chain is Thrombospondin type-1 domain-containing protein 1 (THSD1), found in Pongo abelii (Sumatran orangutan).